The sequence spans 448 residues: Methylenetetrahydrofolate--tRNA-(uracil-5-)-methyltransferase TrmFO (448 aa).

10–15 (GAGLAG) serves as a coordination point for FAD.

The protein belongs to the MnmG family. TrmFO subfamily. FAD serves as cofactor.

The protein resides in the cytoplasm. It carries out the reaction uridine(54) in tRNA + (6R)-5,10-methylene-5,6,7,8-tetrahydrofolate + NADH + H(+) = 5-methyluridine(54) in tRNA + (6S)-5,6,7,8-tetrahydrofolate + NAD(+). The enzyme catalyses uridine(54) in tRNA + (6R)-5,10-methylene-5,6,7,8-tetrahydrofolate + NADPH + H(+) = 5-methyluridine(54) in tRNA + (6S)-5,6,7,8-tetrahydrofolate + NADP(+). In terms of biological role, catalyzes the folate-dependent formation of 5-methyl-uridine at position 54 (M-5-U54) in all tRNAs. The chain is Methylenetetrahydrofolate--tRNA-(uracil-5-)-methyltransferase TrmFO from Lactococcus lactis subsp. cremoris (strain SK11).